The chain runs to 31 residues: Cytochrome b6-f complex subunit 6 (31 aa).

A helical membrane pass occupies residues 4 to 24; it reads LLSYFGFLFAILTLTSVLFIG.

It belongs to the PetL family. The 4 large subunits of the cytochrome b6-f complex are cytochrome b6, subunit IV (17 kDa polypeptide, PetD), cytochrome f and the Rieske protein, while the 4 small subunits are PetG, PetL, PetM and PetN. The complex functions as a dimer.

It is found in the plastid. It localises to the chloroplast thylakoid membrane. Component of the cytochrome b6-f complex, which mediates electron transfer between photosystem II (PSII) and photosystem I (PSI), cyclic electron flow around PSI, and state transitions. PetL is important for photoautotrophic growth as well as for electron transfer efficiency and stability of the cytochrome b6-f complex. The chain is Cytochrome b6-f complex subunit 6 from Angiopteris evecta (Mule's foot fern).